A 623-amino-acid chain; its full sequence is Putative pentatricopeptide repeat-containing protein At3g11460, mitochondrial (623 aa).

The transit peptide at 1-35 directs the protein to the mitochondrion; it reads MIVVTSFVRNSAVAAVASTPWNVRLRELAYQSLFS. PPR repeat units lie at residues 17–51, 52–86, 87–117, 120–154, 155–189, 190–220, 221–255, 256–290, 291–321, 322–356, 357–387, and 393–423; these read ASTP…GSSP, DAFS…GCET, EPFV…NPQS, LSVC…GVSV, DSVT…GLDS, EVAV…MPVK, GLIT…GVCP, DPFT…GFVP, NVFV…MPVK, SLVS…GIRP, DGAV…MKRE, and GPEH…MPVE. The type E motif stretch occupies residues 428–503; sequence VWGALLGACK…KPGYSYVEHK (76 aa). The segment at 504-535 is type E(+) motif; sequence GRVHLFLAGDRSHEQTEEVHRMLDELETSVME. The segment at 536–623 is type DYW motif; it reads LAGNMDCDRG…DGVCSCKDYW (88 aa).

This sequence belongs to the PPR family. PCMP-H subfamily. In terms of assembly, interacts with MORF8/RIP1.

Its subcellular location is the mitochondrion. Its function is as follows. Involved in C-to-U editing of mitochondrial RNA. Required specifically for editing the mitochondrial NAD2 transcript. This chain is Putative pentatricopeptide repeat-containing protein At3g11460, mitochondrial (PCMP-H52), found in Arabidopsis thaliana (Mouse-ear cress).